A 122-amino-acid polypeptide reads, in one-letter code: Fluoride-specific ion channel FluC 2 (122 aa).

The next 4 helical transmembrane spans lie at 3–23 (ITAISLVLFGSTFGLIFRMFI), 38–58 (TSIVNFIASFFLGILLALNLT), 62–82 (LLLLFYIGFLGCFSTFSSFIY), and 93–113 (FMHLFFHYFEVIIISFICFYL). Na(+) is bound by residues Gly72 and Ser75.

It belongs to the fluoride channel Fluc/FEX (TC 1.A.43) family.

The protein localises to the cell inner membrane. It carries out the reaction fluoride(in) = fluoride(out). With respect to regulation, na(+) is not transported, but it plays an essential structural role and its presence is essential for fluoride channel function. Its function is as follows. Fluoride-specific ion channel. Important for reducing fluoride concentration in the cell, thus reducing its toxicity. The sequence is that of Fluoride-specific ion channel FluC 2 from Prochlorococcus marinus (strain MIT 9312).